Here is a 380-residue protein sequence, read N- to C-terminus: Glycogenin-2 (380 aa).

UDP-binding residues include Leu-10, Tyr-16, and Arg-95. 12 residues coordinate UDP-alpha-D-glucose: Leu-10, Tyr-16, Arg-95, Lys-104, Asp-120, Ala-121, Asp-122, Asn-158, Thr-159, Asp-185, Asp-188, and Gln-189. 3 residues coordinate UDP: Asp-120, Ala-121, and Asp-122. A Mn(2+)-binding site is contributed by Asp-120. Residue Asp-122 coordinates Mn(2+). Residues Tyr-230 and Tyr-232 are each glycosylated (O-linked (Glc...) tyrosine). Residues His-249, Gly-252, and Lys-255 each coordinate UDP. Position 249 (His-249) interacts with Mn(2+). Residues Gly-252 and Lys-255 each coordinate UDP-alpha-D-glucose. The segment at 331 to 357 is disordered; that stretch reads SVDRNASQKSTAEKHDIEKPTSKPQSA. Residues 341–351 are compositionally biased toward basic and acidic residues; the sequence is TAEKHDIEKPT. The O-linked (Glc...) tyrosine glycan is linked to Tyr-367.

It belongs to the glycosyltransferase 8 family. Glycogenin subfamily. As to quaternary structure, interacts with glycogen synthase GSY2. It depends on Mn(2+) as a cofactor.

The protein resides in the cytoplasm. It localises to the vacuole. The catalysed reaction is L-tyrosyl-[glycogenin] + UDP-alpha-D-glucose = alpha-D-glucosyl-L-tyrosyl-[glycogenin] + UDP + H(+). It carries out the reaction [1,4-alpha-D-glucosyl](n)-L-tyrosyl-[glycogenin] + UDP-alpha-D-glucose = [1,4-alpha-D-glucosyl](n+1)-L-tyrosyl-[glycogenin] + UDP + H(+). Its function is as follows. Self-glucosylating initiator of glycogen synthesis. It catalyzes the formation of a short alpha (1,4)-glucosyl chain covalently attached via a glucose 1-O-tyrosyl linkage to internal tyrosine residues and these chains act as primers for the elongation reaction catalyzed by glycogen synthase. Capable of transferring glucosyl residues to unbound acceptors such as free oligoglucans or oligoglucan derivatives. The polypeptide is Glycogenin-2 (GLG2) (Saccharomyces cerevisiae (strain YJM789) (Baker's yeast)).